Here is a 378-residue protein sequence, read N- to C-terminus: O-methyltransferase gsfD (378 aa).

Residues 219-220, Asp-244, 266-267, and Arg-282 each bind S-adenosyl-L-methionine; these read GG and DM. Residue His-286 is the Proton acceptor of the active site.

This sequence belongs to the class I-like SAM-binding methyltransferase superfamily. Cation-independent O-methyltransferase family.

It catalyses the reaction desmethyl-dehydrogriseofulvin + S-adenosyl-L-methionine = dehydrogriseofulvin + S-adenosyl-L-homocysteine + H(+). It functions in the pathway secondary metabolite biosynthesis; terpenoid biosynthesis. Its function is as follows. O-methyltransferase; part of the gene cluster that mediates the biosynthesis of griseofulvin, an important antifungal drug that has been in use for a long time for treating dermatophyte infections. The first step of the pathway is the formation of the heptaketide backbone by gsfA which is initiated by priming with acetyl-CoA, followed by sequential condensations of 6 malonyl-CoA units. The resulting benzophenone can undergo a spontaneous dehydration to form norlichexanthone. However, the true precursor for the griseofulvin biosynthesis is not norlichexanthone, but the heptaketide benzophenone that is O-methylated at 3-OH by gsfB to produce griseophenone D which is further methylated at 9-OH by gsfC to yield griseophenone C. Griseophenone C is then substrate of halogenase gsfI which is responsible for the regio-specific chlorination at the C13 position to form griseophenone B. The cytochrome P450 gsfF catalyzes the coupling of orcinol and phloroglucinol rings in griseophenone B to form desmethyl-dehydrogriseofulvin A which is further methylated at 5-OH by gsfD to yield dehydrogriseofulvin. Finally, gsfE performs stereospecific reduction of enone 18 of dehydrogriseofulvin to afford the final product griseofulvin. The sequence is that of O-methyltransferase gsfD from Penicillium aethiopicum.